We begin with the raw amino-acid sequence, 397 residues long: Elongation factor Tu (397 aa).

One can recognise a tr-type G domain in the interval 10 to 207; it reads KPHVNIGTIG…AVDESIPEPV (198 aa). The tract at residues 19–26 is G1; the sequence is GHVDHGKT. 19–26 provides a ligand contact to GTP; the sequence is GHVDHGKT. T26 lines the Mg(2+) pocket. The interval 63 to 67 is G2; the sequence is GITIN. Residues 84-87 are G3; it reads DAPG. GTP is bound by residues 84–88 and 139–142; these read DAPGH and NKSD. A G4 region spans residues 139–142; sequence NKSD. Positions 177-179 are G5; it reads SGL.

The protein belongs to the TRAFAC class translation factor GTPase superfamily. Classic translation factor GTPase family. EF-Tu/EF-1A subfamily. In terms of assembly, monomer.

It is found in the cytoplasm. The enzyme catalyses GTP + H2O = GDP + phosphate + H(+). In terms of biological role, GTP hydrolase that promotes the GTP-dependent binding of aminoacyl-tRNA to the A-site of ribosomes during protein biosynthesis. In Clavibacter michiganensis subsp. michiganensis (strain NCPPB 382), this protein is Elongation factor Tu.